A 547-amino-acid chain; its full sequence is Glucose-6-phosphate isomerase (547 aa).

The active-site Proton donor is E351. Catalysis depends on residues H382 and K509.

This sequence belongs to the GPI family.

The protein resides in the cytoplasm. It catalyses the reaction alpha-D-glucose 6-phosphate = beta-D-fructose 6-phosphate. Its pathway is carbohydrate biosynthesis; gluconeogenesis. The protein operates within carbohydrate degradation; glycolysis; D-glyceraldehyde 3-phosphate and glycerone phosphate from D-glucose: step 2/4. Functionally, catalyzes the reversible isomerization of glucose-6-phosphate to fructose-6-phosphate. This is Glucose-6-phosphate isomerase from Coxiella burnetii (strain CbuG_Q212) (Coxiella burnetii (strain Q212)).